The sequence spans 911 residues: Gem-associated protein 4a (911 aa).

As to quaternary structure, component of the core survival motor neuron (SMN) complex composed of Smn, Gem2, Gem3, rig/Gem5 and one of 3 almost identical Gem4 paralogs encoded by Glos/Gem4a, Gem4b or Gem4c. Interacts with Smn; the interaction is probably indirect.

Functionally, component of the survival motor neuron (SMN) complex that catalyzes the assembly of small nuclear ribonucleoproteins (snRNPs), the building blocks of the spliceosome, and thereby plays an important role in the splicing of cellular pre-mRNAs. One of 3 almost identical paralogs (Glos/Gem4a, Gem4b and Gem4c), resulting from a genomic triplication, that have some redundant function. Required for neuromuscular function and organismal viability. The chain is Gem-associated protein 4a from Drosophila melanogaster (Fruit fly).